An 81-amino-acid chain; its full sequence is Conotoxin Lt6.4 (81 aa).

The N-terminal stretch at 1 to 19 (MKLVLAIVLILMFLSLSAG) is a signal peptide. Residues 20–42 (AETSDNGVSRGGHRPQYWPVTPP) constitute a propeptide that is removed on maturation. 3 disulfide bridges follow: cysteine 46–cysteine 60, cysteine 53–cysteine 65, and cysteine 59–cysteine 80.

This sequence belongs to the conotoxin I3 superfamily. Expressed by the venom duct.

It localises to the secreted. This chain is Conotoxin Lt6.4, found in Conus litteratus (Lettered cone).